The chain runs to 1779 residues: 5-methyl-1-naphthoate synthase (1779 aa).

Positions 10 to 433 (VEPLAVIGMS…GSIAHAVLQQ (424 aa)) constitute a Ketosynthase family 3 (KS3) domain. Active-site for beta-ketoacyl synthase activity residues include Cys181, His316, and His356. An N-terminal hotdog fold region spans residues 902–1027 (HTLIGARTTV…ATVVHEPEVG (126 aa)). Positions 902-1180 (HTLIGARTTV…YVKVQDIGSG (279 aa)) constitute a PKS/mFAS DH domain. A C-terminal hotdog fold region spans residues 1042–1180 (PVSWTWAKVD…YVKVQDIGSG (139 aa)). A Carrier domain is found at 1664-1742 (GELPELVLKV…ALAEFLAAEV (79 aa)). Ser1702 is subject to O-(pantetheine 4'-phosphoryl)serine. Residues 1746 to 1771 (TADAEETDPVAGLPAPQQGSGTAEQL) form a disordered region.

It catalyses the reaction 5 malonyl-CoA + acetyl-CoA + 3 NADPH + 7 H(+) = 5-methyl-1-naphthoate + 5 CO2 + 3 NADP(+) + 6 CoA + 4 H2O. The protein operates within antibiotic biosynthesis. In terms of biological role, polyketide synthase that catalyzes the biosynthesis of the bicyclic aromatic compound 5-methyl-1-naphthoate in the biosynthesis of the antitumor antibiotic azinomycin B. The chain is 5-methyl-1-naphthoate synthase from Streptomyces sahachiroi.